Here is a 192-residue protein sequence, read N- to C-terminus: MRSPQSLRNGETPSPSPRPPRFPTPHFHSTVSLQKLKRFNLLILVFRLSTFCFSLASSVFMLTNPTWYHFDAFRYVFAANAIVAIYSLFEMAASVWEISRGNTLFPEILQVWFDFGHDQVFAYLLLSADSAATALAKTLKGGDTCAASNAFCVQSYIAIALGFAGFLFLGLSSLLSGFRVVCFLINGSRFYV.

A compositionally biased stretch (polar residues) spans 1–11 (MRSPQSLRNGE). The tract at residues 1 to 23 (MRSPQSLRNGETPSPSPRPPRFP) is disordered. Topologically, residues 1-40 (MRSPQSLRNGETPSPSPRPPRFPTPHFHSTVSLQKLKRFN) are cytoplasmic. A compositionally biased stretch (pro residues) spans 14–23 (SPSPRPPRFP). The chain crosses the membrane as a helical span at residues 41-61 (LLILVFRLSTFCFSLASSVFM). Topologically, residues 62–75 (LTNPTWYHFDAFRY) are extracellular. A helical transmembrane segment spans residues 76–96 (VFAANAIVAIYSLFEMAASVW). Over 97-107 (EISRGNTLFPE) the chain is Cytoplasmic. A helical transmembrane segment spans residues 108–128 (ILQVWFDFGHDQVFAYLLLSA). The Extracellular portion of the chain corresponds to 129–156 (DSAATALAKTLKGGDTCAASNAFCVQSY). The helical transmembrane segment at 157 to 177 (IAIALGFAGFLFLGLSSLLSG) threads the bilayer. The Cytoplasmic portion of the chain corresponds to 178–192 (FRVVCFLINGSRFYV).

The protein belongs to the Casparian strip membrane proteins (CASP) family. As to quaternary structure, homodimer and heterodimers.

It localises to the cell membrane. This Ricinus communis (Castor bean) protein is CASP-like protein 4C1.